The following is a 415-amino-acid chain: Protein-lysine N-trimethyltransferase SMYD5 (415 aa).

An SET domain is found at 20–351 (NCVDVRFINN…PGEEICISYL (332 aa)). Residues 95 to 135 (PHPELCKVRPDRHQACPQCQVMYCSSECRQAAMDQYHKILC) form an MYND-type zinc finger. Residue tyrosine 350 participates in S-adenosyl-L-methionine binding. Positions 388–415 (DMTSEDEEEVEGEGETEGEDMEDEMTDV) are disordered.

This sequence belongs to the class V-like SAM-binding methyltransferase superfamily. In terms of tissue distribution, expressed at high levels in the ovary and at lower levels in the fin, testis and brain.

It is found in the cytoplasm. It catalyses the reaction L-lysyl-[protein] + 3 S-adenosyl-L-methionine = N(6),N(6),N(6)-trimethyl-L-lysyl-[protein] + 3 S-adenosyl-L-homocysteine + 3 H(+). It carries out the reaction L-lysyl(20)-[histone H4] + 3 S-adenosyl-L-methionine = N(6),N(6),N(6)-trimethyl-L-lysyl(20)-[histone H4] + 3 S-adenosyl-L-homocysteine + 3 H(+). The catalysed reaction is L-lysyl(36)-[histone H3] + 3 S-adenosyl-L-methionine = N(6),N(6),N(6)-trimethyl-L-lysyl(36)-[histone H3] + 3 S-adenosyl-L-homocysteine + 3 H(+). Protein-lysine N-trimethyltransferase that specifically catalyzes trimethylation of 'Lys-22' of the RPL40/eL40 subunit of the 60S ribosome, thereby promoting translation elongation and protein synthesis. May also act as a histone methyltransferase in the context of histone octamers, but not on nucleosome substrates: trimethylates 'Lys-36' of histone H3 and 'Lys-20' of histone H4 to form H3K36me3 and H4K20me3, respectively. The histone methyltransferase activity, which is independent of its SET domain, is however unsure in vivo. Plays a crucial role in hematopoiesis during embryogenesis by negatively regulating expression of genes related to both primitive and definitive hematopoiesis. The sequence is that of Protein-lysine N-trimethyltransferase SMYD5 from Danio rerio (Zebrafish).